The chain runs to 438 residues: Aspartate--tRNA(Asp/Asn) ligase (438 aa).

Residue glutamate 176 participates in L-aspartate binding. An aspartate region spans residues 198 to 201; it reads QLYK. Residue arginine 220 coordinates L-aspartate. Residues 220 to 222, 228 to 230, and glutamate 361 contribute to the ATP site; these read RAE and RHL. Residues glutamate 361 and serine 364 each coordinate Mg(2+). Residues serine 364 and arginine 368 each contribute to the L-aspartate site. Residue 409–412 coordinates ATP; that stretch reads GADR.

Belongs to the class-II aminoacyl-tRNA synthetase family. Type 2 subfamily. As to quaternary structure, homodimer. Mg(2+) serves as cofactor.

It localises to the cytoplasm. It catalyses the reaction tRNA(Asx) + L-aspartate + ATP = L-aspartyl-tRNA(Asx) + AMP + diphosphate. In terms of biological role, aspartyl-tRNA synthetase with relaxed tRNA specificity since it is able to aspartylate not only its cognate tRNA(Asp) but also tRNA(Asn). Reaction proceeds in two steps: L-aspartate is first activated by ATP to form Asp-AMP and then transferred to the acceptor end of tRNA(Asp/Asn). The sequence is that of Aspartate--tRNA(Asp/Asn) ligase from Methanococcus maripaludis (strain DSM 14266 / JCM 13030 / NBRC 101832 / S2 / LL).